A 143-amino-acid polypeptide reads, in one-letter code: FAD synthase (143 aa).

ATP contacts are provided by residues 13 to 14 (TF), 18 to 21 (HPGH), and Asp96.

This sequence belongs to the archaeal FAD synthase family. In terms of assembly, homodimer. The cofactor is a divalent metal cation.

The enzyme catalyses FMN + ATP + H(+) = FAD + diphosphate. Its pathway is cofactor biosynthesis; FAD biosynthesis; FAD from FMN: step 1/1. Catalyzes the transfer of the AMP portion of ATP to flavin mononucleotide (FMN) to produce flavin adenine dinucleotide (FAD) coenzyme. In Methanothrix thermoacetophila (strain DSM 6194 / JCM 14653 / NBRC 101360 / PT) (Methanosaeta thermophila), this protein is FAD synthase.